A 149-amino-acid polypeptide reads, in one-letter code: Nascent polypeptide-associated complex subunit beta-2 (149 aa).

One can recognise an NAC-A/B domain in the interval 38–103 (DKDNTKLQAE…PKENTLNGLY (66 aa)).

The protein belongs to the NAC-beta family. As to quaternary structure, part of the nascent polypeptide-associated complex (NAC), consisting of EGD2 and either EGD1 or BTT1. NAC associates with ribosomes via EGD1 or BTT1.

Its subcellular location is the cytoplasm. It is found in the nucleus. Its function is as follows. Acts as a component of the nascent polypeptide-associated complex (NAC), which promotes mitochondrial protein import by enhancing productive ribosome interactions with the outer mitochondrial membrane. Also blocks the inappropriate interaction of ribosomes translating non-secretory nascent polypeptides with translocation sites in the membrane of the endoplasmic reticulum. BTT1 may act as a transcription factor that exert a negative effect on the expression of several genes that are transcribed by RNA polymerase II. The sequence is that of Nascent polypeptide-associated complex subunit beta-2 (BTT1) from Saccharomyces cerevisiae (strain YJM789) (Baker's yeast).